We begin with the raw amino-acid sequence, 824 residues long: Leucine--tRNA ligase (824 aa).

The short motif at 42–52 (PYPSGRIHMGH) is the 'HIGH' region element. The 'KMSKS' region signature appears at 581 to 585 (KMSKS). K584 contributes to the ATP binding site.

It belongs to the class-I aminoacyl-tRNA synthetase family.

It is found in the cytoplasm. It carries out the reaction tRNA(Leu) + L-leucine + ATP = L-leucyl-tRNA(Leu) + AMP + diphosphate. The sequence is that of Leucine--tRNA ligase from Geotalea daltonii (strain DSM 22248 / JCM 15807 / FRC-32) (Geobacter daltonii).